We begin with the raw amino-acid sequence, 116 residues long: Large ribosomal subunit protein uL18 (116 aa).

This sequence belongs to the universal ribosomal protein uL18 family. In terms of assembly, part of the 50S ribosomal subunit; part of the 5S rRNA/L5/L18/L25 subcomplex. Contacts the 5S and 23S rRNAs.

Its function is as follows. This is one of the proteins that bind and probably mediate the attachment of the 5S RNA into the large ribosomal subunit, where it forms part of the central protuberance. The protein is Large ribosomal subunit protein uL18 of Alcanivorax borkumensis (strain ATCC 700651 / DSM 11573 / NCIMB 13689 / SK2).